We begin with the raw amino-acid sequence, 303 residues long: D-alanine--D-alanine ligase B (303 aa).

The 196-residue stretch at 103–298 folds into the ATP-grasp domain; it reads KLLWKGAGLP…YEDLCLKVLD (196 aa). Position 129 to 184 (129 to 184) interacts with ATP; the sequence is ERQLGLPIFVKPSTEGSSIGVTKVKQPGELRAAFEEARKYDKVVIAEQFIGGGEYT. Mg(2+) contacts are provided by Asp252, Glu265, and Asn267.

This sequence belongs to the D-alanine--D-alanine ligase family. The cofactor is Mg(2+). Mn(2+) serves as cofactor.

Its subcellular location is the cytoplasm. The enzyme catalyses 2 D-alanine + ATP = D-alanyl-D-alanine + ADP + phosphate + H(+). The protein operates within cell wall biogenesis; peptidoglycan biosynthesis. Its function is as follows. Cell wall formation. In Chromobacterium violaceum (strain ATCC 12472 / DSM 30191 / JCM 1249 / CCUG 213 / NBRC 12614 / NCIMB 9131 / NCTC 9757 / MK), this protein is D-alanine--D-alanine ligase B.